Reading from the N-terminus, the 407-residue chain is Bifunctional enzyme IspD/IspF (407 aa).

Positions 1–247 (MVHIQADGAR…RLSHNALPDV (247 aa)) are 2-C-methyl-D-erythritol 4-phosphate cytidylyltransferase. A 2-C-methyl-D-erythritol 2,4-cyclodiphosphate synthase region spans residues 248 to 407 (RTGNGYDVHQ…ATVVFQGKPQ (160 aa)). A divalent metal cation is bound by residues Asp-254 and His-256. 4-CDP-2-C-methyl-D-erythritol 2-phosphate is bound by residues 254-256 (DVH) and 280-281 (HS). His-288 lines the a divalent metal cation pocket. Residues 302 to 304 (DIG), 378 to 381 (TTNE), Phe-385, and Arg-388 contribute to the 4-CDP-2-C-methyl-D-erythritol 2-phosphate site.

In the N-terminal section; belongs to the IspD/TarI cytidylyltransferase family. IspD subfamily. It in the C-terminal section; belongs to the IspF family. A divalent metal cation is required as a cofactor.

It catalyses the reaction 2-C-methyl-D-erythritol 4-phosphate + CTP + H(+) = 4-CDP-2-C-methyl-D-erythritol + diphosphate. The catalysed reaction is 4-CDP-2-C-methyl-D-erythritol 2-phosphate = 2-C-methyl-D-erythritol 2,4-cyclic diphosphate + CMP. Its pathway is isoprenoid biosynthesis; isopentenyl diphosphate biosynthesis via DXP pathway; isopentenyl diphosphate from 1-deoxy-D-xylulose 5-phosphate: step 2/6. It functions in the pathway isoprenoid biosynthesis; isopentenyl diphosphate biosynthesis via DXP pathway; isopentenyl diphosphate from 1-deoxy-D-xylulose 5-phosphate: step 4/6. Functionally, bifunctional enzyme that catalyzes the formation of 4-diphosphocytidyl-2-C-methyl-D-erythritol from CTP and 2-C-methyl-D-erythritol 4-phosphate (MEP) (IspD), and catalyzes the conversion of 4-diphosphocytidyl-2-C-methyl-D-erythritol 2-phosphate (CDP-ME2P) to 2-C-methyl-D-erythritol 2,4-cyclodiphosphate (ME-CPP) with a corresponding release of cytidine 5-monophosphate (CMP) (IspF). The sequence is that of Bifunctional enzyme IspD/IspF from Allorhizobium ampelinum (strain ATCC BAA-846 / DSM 112012 / S4) (Agrobacterium vitis (strain S4)).